Reading from the N-terminus, the 890-residue chain is Alanine--tRNA ligase (890 aa).

Zn(2+) contacts are provided by His-568, His-572, Cys-680, and His-684.

Belongs to the class-II aminoacyl-tRNA synthetase family. Zn(2+) serves as cofactor.

The protein resides in the cytoplasm. It carries out the reaction tRNA(Ala) + L-alanine + ATP = L-alanyl-tRNA(Ala) + AMP + diphosphate. In terms of biological role, catalyzes the attachment of alanine to tRNA(Ala) in a two-step reaction: alanine is first activated by ATP to form Ala-AMP and then transferred to the acceptor end of tRNA(Ala). Also edits incorrectly charged Ser-tRNA(Ala) and Gly-tRNA(Ala) via its editing domain. This Psychrobacter arcticus (strain DSM 17307 / VKM B-2377 / 273-4) protein is Alanine--tRNA ligase.